We begin with the raw amino-acid sequence, 726 residues long: ORC ubiquitin ligase 1 (726 aa).

The RING-type; degenerate zinc-finger motif lies at 18–56 (CHICLGKVRQPVICINNHVFCSICIDLWLKNNSQCPACR). Coiled-coil stretches lie at residues 87–129 (LRKT…TILD) and 155–270 (ETVA…MNSI). Ser210 carries the post-translational modification Phosphoserine. Residues 274–335 (ALPADGKGSK…ARQESTSKAE (62 aa)) are disordered. The span at 280 to 290 (KGSKGSEEDVA) shows a compositional bias: basic and acidic residues. Over residues 300-320 (KQPSSSTSSSSHLAKPSSSRL) the composition is skewed to low complexity. Positions 321 to 334 (CDTSSARQESTSKA) are enriched in polar residues. A phosphoserine mark is found at Ser526, Ser553, Ser561, Ser568, Ser570, Ser719, and Ser721. The disordered stretch occupies residues 687-726 (QSPWSTSFVPEKRNKNVNQSTKRKIQSSLSNASPSKATKS). Residues 702–726 (NVNQSTKRKIQSSLSNASPSKATKS) are compositionally biased toward polar residues.

As to quaternary structure, associates with ORC complex. Binds to chromatin; association is cell cycle-regulated, absent from mitotic chromosomes, is associated with chromatin from G1 and partially released from chromatin from mid S-phase. In terms of processing, auto-ubiquitinated.

It is found in the chromosome. The catalysed reaction is S-ubiquitinyl-[E2 ubiquitin-conjugating enzyme]-L-cysteine + [acceptor protein]-L-lysine = [E2 ubiquitin-conjugating enzyme]-L-cysteine + N(6)-ubiquitinyl-[acceptor protein]-L-lysine.. In terms of biological role, E3 ubiquitin ligase essential for DNA replication origin activation during S phase. Acts as a replication origin selector which selects the origins to be fired and catalyzes the multi-mono-ubiquitination of a subset of chromatin-bound ORC3 and ORC5 during S-phase. The protein is ORC ubiquitin ligase 1 (OBI1) of Pongo abelii (Sumatran orangutan).